The primary structure comprises 391 residues: Extracellular metalloproteinase 3 (391 aa).

A propeptide spanning residues 1–9 is cleaved from the precursor; sequence HNVVDYVAS. Residue Asn173 is glycosylated (N-linked (GlcNAc...) asparagine). His192 is a binding site for Zn(2+). Glu193 is an active-site residue. His196 is a binding site for Zn(2+). 2 N-linked (GlcNAc...) asparagine glycosylation sites follow: Asn243 and Asn385.

Belongs to the peptidase M36 family. The cofactor is Zn(2+).

The protein resides in the secreted. Secreted metalloproteinase probably acting as a virulence factor. The protein is Extracellular metalloproteinase 3 (MEP3) of Trichophyton soudanense.